We begin with the raw amino-acid sequence, 271 residues long: Large ribosomal subunit protein eL8 (271 aa).

Belongs to the eukaryotic ribosomal protein eL8 family.

This chain is Large ribosomal subunit protein eL8 (RpL7A), found in Drosophila melanogaster (Fruit fly).